The primary structure comprises 428 residues: 3-phosphoshikimate 1-carboxyvinyltransferase (428 aa).

K20, S21, and R25 together coordinate 3-phosphoshikimate. K20 is a phosphoenolpyruvate binding site. The phosphoenolpyruvate site is built by G92 and R120. Residues S166, Q168, D314, and K341 each coordinate 3-phosphoshikimate. Residue Q168 participates in phosphoenolpyruvate binding. D314 serves as the catalytic Proton acceptor. Phosphoenolpyruvate contacts are provided by R345 and R387.

Belongs to the EPSP synthase family. As to quaternary structure, monomer.

It is found in the cytoplasm. The catalysed reaction is 3-phosphoshikimate + phosphoenolpyruvate = 5-O-(1-carboxyvinyl)-3-phosphoshikimate + phosphate. The protein operates within metabolic intermediate biosynthesis; chorismate biosynthesis; chorismate from D-erythrose 4-phosphate and phosphoenolpyruvate: step 6/7. Functionally, catalyzes the transfer of the enolpyruvyl moiety of phosphoenolpyruvate (PEP) to the 5-hydroxyl of shikimate-3-phosphate (S3P) to produce enolpyruvyl shikimate-3-phosphate and inorganic phosphate. The polypeptide is 3-phosphoshikimate 1-carboxyvinyltransferase (Listeria monocytogenes serotype 4a (strain HCC23)).